A 640-amino-acid chain; its full sequence is Probable Ufm1-specific protease (640 aa).

Residues Cys-467, Asp-591, and His-593 contribute to the active site.

It belongs to the peptidase C78 family.

Thiol protease which recognizes and hydrolyzes the peptide bond at the C-terminal Gly of ufm-1, a ubiquitin-like modifier protein bound to a number of target proteins. This Oryza sativa subsp. japonica (Rice) protein is Probable Ufm1-specific protease.